Consider the following 200-residue polypeptide: A-type ATP synthase subunit E 3 (200 aa).

It belongs to the V-ATPase E subunit family. In terms of assembly, has multiple subunits with at least A(3), B(3), C, D, E, F, H, I and proteolipid K(x).

It is found in the cell membrane. Component of the A-type ATP synthase that produces ATP from ADP in the presence of a proton gradient across the membrane. The polypeptide is A-type ATP synthase subunit E 3 (Methanospirillum hungatei JF-1 (strain ATCC 27890 / DSM 864 / NBRC 100397 / JF-1)).